The primary structure comprises 805 residues: Leucine--tRNA ligase (805 aa).

The 'HIGH' region signature appears at 40–51; that stretch reads PYPSGSGLHVGH. The 'KMSKS' region motif lies at 576–580; the sequence is KMSKS. ATP is bound at residue lysine 579.

It belongs to the class-I aminoacyl-tRNA synthetase family.

It localises to the cytoplasm. It carries out the reaction tRNA(Leu) + L-leucine + ATP = L-leucyl-tRNA(Leu) + AMP + diphosphate. The polypeptide is Leucine--tRNA ligase (Chlorobium phaeovibrioides (strain DSM 265 / 1930) (Prosthecochloris vibrioformis (strain DSM 265))).